The following is a 1458-amino-acid chain: ATPase family AAA domain-containing protein 2B (1458 aa).

Positions 1 to 155 (MVNTRKSSLR…LRGEKKGDGD (155 aa)) are disordered. At serine 16 the chain carries Phosphoserine. Residues 23-33 (PGAGAEPGATG) show a composition bias toward gly residues. The span at 34 to 58 (GSSHFISSRTRSSKTRAASCPAAKA) shows a compositional bias: low complexity. A phosphoserine mark is found at serine 79, serine 81, and serine 86. Positions 99–115 (VCKDKSKSRSTGQREEW) are enriched in basic and acidic residues. Polar residues predominate over residues 116 to 129 (NLSTGQARLTSQPG). At serine 140 the chain carries Phosphoserine. Threonine 221 carries the post-translational modification Phosphothreonine. The disordered stretch occupies residues 244-286 (NSYGIQNHHEVSTEGEEEESQEEDGDIEVEEAEGEENDRPYNL). A compositionally biased stretch (acidic residues) spans 256-279 (TEGEEEESQEEDGDIEVEEAEGEE). At serine 318 the chain carries Phosphoserine. A compositionally biased stretch (basic residues) spans 321–332 (RRSHIRRKKHAI). The interval 321–353 (RRSHIRRKKHAIHSSDTTSSDEERFERRKSKSM) is disordered. Residue 441–448 (GPPGTGKT) participates in ATP binding. Serine 939 is subject to Phosphoserine. Residues 943-974 (QLSESEKSRMEDQEENTLRELRLFLRDVTKRL) are a coiled coil. A Bromo domain is found at 951–1066 (RMEDQEENTL…DTAHAIIAAE (116 aa)). 3 disordered regions span residues 1189-1208 (DCHE…NDES), 1217-1257 (QGQR…EQTS), and 1309-1330 (LLED…DDLE). Over residues 1240–1252 (NESLLVNSSSSLN) the composition is skewed to low complexity. 2 positions are modified to phosphoserine: serine 1338 and serine 1347.

Belongs to the AAA ATPase family. In terms of assembly, binds acetylated lysine residues in histone H1.4, H2A, H2B, H3 and H4 (in vitro).

Its subcellular location is the nucleus. The sequence is that of ATPase family AAA domain-containing protein 2B (ATAD2B) from Homo sapiens (Human).